A 93-amino-acid chain; its full sequence is Small ribosomal subunit protein uS19 (93 aa).

It belongs to the universal ribosomal protein uS19 family.

Its function is as follows. Protein S19 forms a complex with S13 that binds strongly to the 16S ribosomal RNA. The protein is Small ribosomal subunit protein uS19 of Microcystis aeruginosa (strain NIES-843 / IAM M-2473).